A 103-amino-acid polypeptide reads, in one-letter code: MSLGPWEIAIIVLLIIVLFGAKKLPDAARSIGRSMRIFKSEVKEMQKDDETPAQPEQQPQGYQHPQQIEAPQNLQQPNFQQHYQNQPQQPDYRQNYEDPNRTP.

Residues 1–21 (MSLGPWEIAIIVLLIIVLFGA) traverse the membrane as a helical segment. The interval 42-103 (VKEMQKDDET…QNYEDPNRTP (62 aa)) is disordered. Residues 52–90 (PAQPEQQPQGYQHPQQIEAPQNLQQPNFQQHYQNQPQQP) are compositionally biased toward low complexity. The span at 94–103 (QNYEDPNRTP) shows a compositional bias: basic and acidic residues.

It belongs to the TatA/E family. As to quaternary structure, the Tat system comprises two distinct complexes: a TatABC complex, containing multiple copies of TatA, TatB and TatC subunits, and a separate TatA complex, containing only TatA subunits. Substrates initially bind to the TatABC complex, which probably triggers association of the separate TatA complex to form the active translocon.

The protein localises to the cell membrane. Functionally, part of the twin-arginine translocation (Tat) system that transports large folded proteins containing a characteristic twin-arginine motif in their signal peptide across membranes. TatA could form the protein-conducting channel of the Tat system. This is Sec-independent protein translocase protein TatA from Corynebacterium efficiens (strain DSM 44549 / YS-314 / AJ 12310 / JCM 11189 / NBRC 100395).